Here is a 523-residue protein sequence, read N- to C-terminus: Succinate-semialdehyde dehydrogenase, mitochondrial (523 aa).

The transit peptide at 1 to 35 (MATCFLLRNFCAARPALRPPGRLLREPAGAQRRSY) directs the protein to the mitochondrion. The residue at position 114 (Lys114) is an N6-acetyllysine; alternate. N6-succinyllysine; alternate is present on Lys114. N6-succinyllysine occurs at positions 123 and 172. Residues Arg201 and 216-219 (KPAE) each bind NAD(+). Arg201 serves as a coordination point for substrate. The residue at position 253 (Lys253) is an N6-acetyllysine; alternate. N6-succinyllysine; alternate is present on Lys253. 272–277 (GSTATG) serves as a coordination point for NAD(+). Glu294 (proton acceptor) is an active-site residue. Arg322 is a binding site for substrate. Cys328 (nucleophile) is an active-site residue. Cys328 and Cys330 form a disulfide bridge. Residue Lys353 is modified to N6-acetyllysine. Residue Lys390 is modified to N6-succinyllysine. Residue Lys399 is modified to N6-acetyllysine. Ser486 serves as a coordination point for substrate. The residue at position 487 (Ser487) is a Phosphoserine.

The protein belongs to the aldehyde dehydrogenase family. Homotetramer. In terms of tissue distribution, brain, pancreas, heart, liver, skeletal muscle, kidney. Lower in spleen, lung, kidney and testis.

The protein localises to the mitochondrion. It catalyses the reaction succinate semialdehyde + NAD(+) + H2O = succinate + NADH + 2 H(+). It participates in amino-acid degradation; 4-aminobutanoate degradation. Its activity is regulated as follows. Redox-regulated. Inhibited under oxydizing conditions. Catalyzes one step in the degradation of the inhibitory neurotransmitter gamma-aminobutyric acid (GABA). The polypeptide is Succinate-semialdehyde dehydrogenase, mitochondrial (Aldh5a1) (Rattus norvegicus (Rat)).